A 68-amino-acid polypeptide reads, in one-letter code: Medusin-AS (68 aa).

Positions 1 to 22 (MAFLKKSLFLVLFLGLVSLSVC) are cleaved as a signal peptide. Positions 23 to 49 (EEEKRESEEEKNEQEEDDRDERSEEKR) are excised as a propeptide. The tract at residues 24 to 46 (EEKRESEEEKNEQEEDDRDERSE) is disordered. Residues 31 to 41 (EEKNEQEEDDR) show a composition bias toward acidic residues. Position 67 is a leucine amide (Leu-67).

It belongs to the frog skin active peptide (FSAP) family. Medusin subfamily. As to expression, expressed by the skin glands.

It is found in the secreted. In terms of biological role, antimicrobial peptide active against Gram-positive bacteria and fungi but inactive against Gram-negative bacteria. Also inhibits growth of B.dendrobatidis zoospores at high concentrations. Shows anticancer activities. Shows hemolytic activity. The chain is Medusin-AS from Agalychnis spurrelli (Gliding leaf frog).